The sequence spans 376 residues: MPGDYYDILGVDRNASKEDLKRAYRRLARKYHPDVNKEPGAEERFKEINRAYEVLSEPDTRSRYDQFGEAGVSGAGGFNYGDMGDMGGFADIFETIFSGFGGGMGTGGTRRRTGPVKGDDLRLDLKLDFREAVFGGEKEIRIPHLETCQVCKGDGAKPGTGAKTCSTCNGQGQVRRATRTPFGSFAQVSACPACNGQGQVIEEKCEVCNGAGRRQVTEKVKITIPAGVDDGTRLRVSRKGDAGLRGGPQGDLYVYLYVEPDKVFTRDKMNILSEITISYLQAILGCTVTVDTVDGEQELTIPAGTQPNTILTLENLGVPKLGNDAIRGDHLITVKVDIPTRINAEERELLEKLAHIKGQSHGKGGLEGFLGSLFHK.

The J domain occupies 4–68 (DYYDILGVDR…DTRSRYDQFG (65 aa)). A CR-type zinc finger spans residues 135–217 (GGEKEIRIPH…CNGAGRRQVT (83 aa)). Residues Cys-148, Cys-151, Cys-165, Cys-168, Cys-191, Cys-194, Cys-205, and Cys-208 each coordinate Zn(2+). CXXCXGXG motif repeat units follow at residues 148–155 (CQVCKGDG), 165–172 (CSTCNGQG), 191–198 (CPACNGQG), and 205–212 (CEVCNGAG).

It belongs to the DnaJ family. In terms of assembly, homodimer. It depends on Zn(2+) as a cofactor.

The protein localises to the cytoplasm. Functionally, participates actively in the response to hyperosmotic and heat shock by preventing the aggregation of stress-denatured proteins and by disaggregating proteins, also in an autonomous, DnaK-independent fashion. Unfolded proteins bind initially to DnaJ; upon interaction with the DnaJ-bound protein, DnaK hydrolyzes its bound ATP, resulting in the formation of a stable complex. GrpE releases ADP from DnaK; ATP binding to DnaK triggers the release of the substrate protein, thus completing the reaction cycle. Several rounds of ATP-dependent interactions between DnaJ, DnaK and GrpE are required for fully efficient folding. Also involved, together with DnaK and GrpE, in the DNA replication of plasmids through activation of initiation proteins. The polypeptide is Chaperone protein DnaJ (Crocosphaera subtropica (strain ATCC 51142 / BH68) (Cyanothece sp. (strain ATCC 51142))).